A 532-amino-acid chain; its full sequence is CTP synthase (532 aa).

The interval 1–267 (MTKFIFVTGG…DDIVLKILGL (267 aa)) is amidoligase domain. Serine 13 lines the CTP pocket. Position 13 (serine 13) interacts with UTP. 14 to 19 (SLGKGI) lines the ATP pocket. An L-glutamine-binding site is contributed by tyrosine 54. Aspartate 71 lines the ATP pocket. Mg(2+)-binding residues include aspartate 71 and glutamate 141. Residues 148–150 (DIE), 188–193 (KTKPTQ), and lysine 224 contribute to the CTP site. UTP is bound by residues 188-193 (KTKPTQ) and lysine 224. One can recognise a Glutamine amidotransferase type-1 domain in the interval 292–532 (EIAIVGKYVE…EFVKATLANR (241 aa)). L-glutamine is bound at residue glycine 354. The active-site Nucleophile; for glutamine hydrolysis is cysteine 381. Residues 382–385 (LGMQ), glutamate 405, and arginine 462 each bind L-glutamine. Active-site residues include histidine 507 and glutamate 509.

It belongs to the CTP synthase family. As to quaternary structure, homotetramer.

It catalyses the reaction UTP + L-glutamine + ATP + H2O = CTP + L-glutamate + ADP + phosphate + 2 H(+). It carries out the reaction L-glutamine + H2O = L-glutamate + NH4(+). The enzyme catalyses UTP + NH4(+) + ATP = CTP + ADP + phosphate + 2 H(+). It functions in the pathway pyrimidine metabolism; CTP biosynthesis via de novo pathway; CTP from UDP: step 2/2. Its activity is regulated as follows. Allosterically activated by GTP, when glutamine is the substrate; GTP has no effect on the reaction when ammonia is the substrate. The allosteric effector GTP functions by stabilizing the protein conformation that binds the tetrahedral intermediate(s) formed during glutamine hydrolysis. Inhibited by the product CTP, via allosteric rather than competitive inhibition. Its function is as follows. Catalyzes the ATP-dependent amination of UTP to CTP with either L-glutamine or ammonia as the source of nitrogen. Regulates intracellular CTP levels through interactions with the four ribonucleotide triphosphates. This chain is CTP synthase, found in Desulfitobacterium hafniense (strain Y51).